A 265-amino-acid chain; its full sequence is Speedy protein E8 (265 aa).

The interval 1–80 (MGQILGKIMM…EPEKELAPEP (80 aa)) is disordered. Over residues 66-80 (DESDDEPEKELAPEP) the composition is skewed to acidic residues.

It belongs to the Speedy/Ringo family.

This chain is Speedy protein E8, found in Homo sapiens (Human).